The following is a 165-amino-acid chain: Xanthine-guanine phosphoribosyltransferase (165 aa).

Residues 41-42 (RG) and 98-106 (DDLTDTGKT) each bind 5-phospho-alpha-D-ribose 1-diphosphate. Residue aspartate 99 coordinates Mg(2+). Guanine contacts are provided by aspartate 102 and isoleucine 145. Residues aspartate 102 and isoleucine 145 each contribute to the xanthine site. Residues 102–106 (DTGKT) and 144–145 (WI) contribute to the GMP site.

The protein belongs to the purine/pyrimidine phosphoribosyltransferase family. XGPT subfamily. Homotetramer. It depends on Mg(2+) as a cofactor.

The protein resides in the cell inner membrane. The catalysed reaction is GMP + diphosphate = guanine + 5-phospho-alpha-D-ribose 1-diphosphate. The enzyme catalyses XMP + diphosphate = xanthine + 5-phospho-alpha-D-ribose 1-diphosphate. It catalyses the reaction IMP + diphosphate = hypoxanthine + 5-phospho-alpha-D-ribose 1-diphosphate. Its pathway is purine metabolism; GMP biosynthesis via salvage pathway; GMP from guanine: step 1/1. It participates in purine metabolism; XMP biosynthesis via salvage pathway; XMP from xanthine: step 1/1. Purine salvage pathway enzyme that catalyzes the transfer of the ribosyl-5-phosphate group from 5-phospho-alpha-D-ribose 1-diphosphate (PRPP) to the N9 position of the 6-oxopurines guanine and xanthine to form the corresponding ribonucleotides GMP (guanosine 5'-monophosphate) and XMP (xanthosine 5'-monophosphate), with the release of PPi. To a lesser extent, also acts on hypoxanthine. In Agrobacterium fabrum (strain C58 / ATCC 33970) (Agrobacterium tumefaciens (strain C58)), this protein is Xanthine-guanine phosphoribosyltransferase.